Consider the following 297-residue polypeptide: tRNA dimethylallyltransferase (297 aa).

Residue 10-17 (GITASGKS) participates in ATP binding. 12–17 (TASGKS) contributes to the substrate binding site. Residues 36-39 (DSKQ) form an interaction with substrate tRNA region.

The protein belongs to the IPP transferase family. As to quaternary structure, monomer. Requires Mg(2+) as cofactor.

It catalyses the reaction adenosine(37) in tRNA + dimethylallyl diphosphate = N(6)-dimethylallyladenosine(37) in tRNA + diphosphate. In terms of biological role, catalyzes the transfer of a dimethylallyl group onto the adenine at position 37 in tRNAs that read codons beginning with uridine, leading to the formation of N6-(dimethylallyl)adenosine (i(6)A). This Wolbachia sp. subsp. Brugia malayi (strain TRS) protein is tRNA dimethylallyltransferase.